The sequence spans 323 residues: o-succinylbenzoate synthase (323 aa).

Catalysis depends on K134, which acts as the Proton donor. Mg(2+)-binding residues include D162, E191, and D214. Catalysis depends on K236, which acts as the Proton acceptor.

Belongs to the mandelate racemase/muconate lactonizing enzyme family. MenC type 1 subfamily. It depends on a divalent metal cation as a cofactor.

It carries out the reaction (1R,6R)-6-hydroxy-2-succinyl-cyclohexa-2,4-diene-1-carboxylate = 2-succinylbenzoate + H2O. It participates in quinol/quinone metabolism; 1,4-dihydroxy-2-naphthoate biosynthesis; 1,4-dihydroxy-2-naphthoate from chorismate: step 4/7. The protein operates within quinol/quinone metabolism; menaquinone biosynthesis. Converts 2-succinyl-6-hydroxy-2,4-cyclohexadiene-1-carboxylate (SHCHC) to 2-succinylbenzoate (OSB). In Pectobacterium atrosepticum (strain SCRI 1043 / ATCC BAA-672) (Erwinia carotovora subsp. atroseptica), this protein is o-succinylbenzoate synthase.